A 239-amino-acid polypeptide reads, in one-letter code: Mannose-binding protein A (239 aa).

A signal peptide spans 1 to 18 (MLLLPLLPVLLCVVSVSS). The disordered stretch occupies residues 35 to 88 (ACGRDGRDGPKGEKGEPGQGLRGLQGPPGKLGPPGSVGSPGSPGPKGQKGDHGD). Residues 37–89 (GRDGRDGPKGEKGEPGQGLRGLQGPPGKLGPPGSVGSPGSPGPKGQKGDHGDN) enclose the Collagen-like domain. The span at 38–50 (RDGRDGPKGEKGE) shows a compositional bias: basic and acidic residues. Pro-44 is subject to 4-hydroxyproline. Residues Lys-45 and Lys-48 each carry the 5-hydroxylysine modification. Lys-45 and Lys-48 each carry an O-linked (Gal...) hydroxylysine glycan. 4-hydroxyproline occurs at positions 51, 62, 68, 74, and 79. Residues 58–74 (LQGPPGKLGPPGSVGSP) show a composition bias toward low complexity. 5-hydroxylysine is present on residues Lys-80 and Lys-83. Residues Lys-80 and Lys-83 are each glycosylated (O-linked (Gal...) hydroxylysine). One can recognise a C-type lectin domain in the interval 144-239 (SLCTELQGTV…SFKAVCEFPA (96 aa)). Disulfide bonds link Cys-146/Cys-235 and Cys-213/Cys-227. Residues Asp-179, Glu-183, Glu-203, Asn-205, Glu-211, Asp-212, Asn-223, and Asp-224 each contribute to the Ca(2+) site. Residues 203 to 211 (EPNNHGSGE) are calcium-dependent carbohydrate binding.

In terms of assembly, homotrimer. Forms higher oligomeric complexes formed by the association of two, three or more homotrimers. Oligomerization occurs in the endoplasmic reticulum. Interacts with MASP1 and MASP2. Post-translationally, hydroxylated on lysine and proline residues within the collagen-like domain. O-glycosylated. O-linked glycans on hydroxylysine residues consist of Glc-Gal disaccharides bound to the oxygen atom of post-translationally added hydroxyl groups. Detected in liver and blood serum (at protein level). Detected in liver.

Its subcellular location is the secreted. Its function is as follows. Calcium-dependent lectin. Plays a role in the innate immune response by binding mannose, fucose and N-acetylglucosamine moieties on different microorganisms and mediating activation of the lectin complement pathway. Binds to late apoptotic cells, as well as to apoptotic blebs and to necrotic cells, but not to early apoptotic cells, facilitating their uptake by macrophages. This is Mannose-binding protein A (Mbl1) from Mus musculus (Mouse).